Reading from the N-terminus, the 210-residue chain is MAKSNEIKAVLTSPIISNNPITLQILGICSALAVTSKLENAVVMTVAVLFVTAFSNFFISTIRNYIPNSVRIIVQMAIIASLVIVVDQFLRAYAFSISKQLSVYVGLIITNCIVMGRAEAFAMKNKPIASFMDGVGNGLGYGVILILVGAFRELFGSGSLYGFVILPLTSNGGWYQSNGLLLLAPSAFFIVGGIIWAVRTMRPDQVEPKE.

The next 6 membrane-spanning stretches (helical) occupy residues 42-62 (VVMT…ISTI), 66-86 (IPNS…VIVV), 103-123 (VYVG…AFAM), 131-151 (FMDG…VGAF), 154-174 (LFGS…NGGW), and 178-198 (NGLL…IWAV).

This sequence belongs to the NqrDE/RnfAE family. Composed of six subunits; NqrA, NqrB, NqrC, NqrD, NqrE and NqrF.

The protein localises to the cell inner membrane. It catalyses the reaction a ubiquinone + n Na(+)(in) + NADH + H(+) = a ubiquinol + n Na(+)(out) + NAD(+). Its function is as follows. NQR complex catalyzes the reduction of ubiquinone-1 to ubiquinol by two successive reactions, coupled with the transport of Na(+) ions from the cytoplasm to the periplasm. NqrA to NqrE are probably involved in the second step, the conversion of ubisemiquinone to ubiquinol. The sequence is that of Na(+)-translocating NADH-quinone reductase subunit D from Psychromonas ingrahamii (strain DSM 17664 / CCUG 51855 / 37).